The sequence spans 1473 residues: Sulfite reductase [NADPH] subunit beta (1473 aa).

Residues 728 to 876 (LTILFASDGG…AYNLWEPELW (149 aa)) enclose the Flavodoxin-like domain. [4Fe-4S] cluster is bound by residues Cys1328, Cys1334, Cys1373, and Cys1377. Siroheme is bound at residue Cys1377.

This sequence belongs to the nitrite and sulfite reductase 4Fe-4S domain family. Alpha(2)-beta(2). The alpha component is a flavoprotein, the beta component is a hemoprotein. Siroheme is required as a cofactor. Requires [4Fe-4S] cluster as cofactor.

It localises to the cytoplasm. It catalyses the reaction hydrogen sulfide + 3 NADP(+) + 3 H2O = sulfite + 3 NADPH + 4 H(+). It participates in sulfur metabolism; hydrogen sulfide biosynthesis; hydrogen sulfide from sulfite (NADPH route): step 1/1. Catalyzes the reduction of sulfite to sulfide, one of several activities required for the biosynthesis of L-cysteine from sulfate. The sequence is that of Sulfite reductase [NADPH] subunit beta (sir1) from Schizosaccharomyces pombe (strain 972 / ATCC 24843) (Fission yeast).